The chain runs to 262 residues: MAPGFTISFVNKTIIVTGGNRGIGLAFTRAVAAAGANVAVIYRSAKDAVEVTEKVGKEFGVKTKAYQCDVSNTDIVTKTIQQIDADLGAISGLIANAGVSVVKPATELTHEDFKFVYDVNVFGVFNTCRAVAKLWLQKQQKGSIVVTSSMSSQIINQSSLNGSLTQVFYNSSKAACSNLVKGLAAEWASAGIRVNALSPGYVNTDQTAHMDKKIRDHQASNIPLNRFAQPEEMTGQAILLLSDHATYMTGGEYFIDGGQLIW.

NADP(+) is bound by residues I23, D69, N96, and R129. S149 acts as the Proton donor in catalysis. Positions 169, 173, 202, 204, and 206 each coordinate NADP(+). Catalysis depends on Y169, which acts as the Proton acceptor. The Lowers pKa of active site Tyr role is filled by K173.

Belongs to the short-chain dehydrogenases/reductases (SDR) family. Homotetramer.

It carries out the reaction D-mannitol + NADP(+) = D-fructose + NADPH + H(+). The chain is NADP-dependent mannitol dehydrogenase (mtdH) from Agaricus bisporus (White button mushroom).